The chain runs to 337 residues: Fructose-1,6-bisphosphatase class 1 (337 aa).

Residues E94, D116, L118, and D119 each coordinate Mg(2+). Residues 119–122, N210, and K276 each bind substrate; that span reads DGSS. A Mg(2+)-binding site is contributed by E282.

It belongs to the FBPase class 1 family. As to quaternary structure, homotetramer. Mg(2+) serves as cofactor.

The protein localises to the cytoplasm. It catalyses the reaction beta-D-fructose 1,6-bisphosphate + H2O = beta-D-fructose 6-phosphate + phosphate. It functions in the pathway carbohydrate biosynthesis; gluconeogenesis. The sequence is that of Fructose-1,6-bisphosphatase class 1 from Burkholderia vietnamiensis (strain G4 / LMG 22486) (Burkholderia cepacia (strain R1808)).